A 575-amino-acid chain; its full sequence is MKKTVKILLILITVFLKVHCNGGHDDEAADFLSHTNIDDPNNSSDPNKNSDQGDTMGEDEDRLVIDLFREYNFLIRPVKNVSSPPVVVDFGVAMILLINVDEKNQILQTNVWLTMKWNDFQLAWNPAEYGNISNLHVPSDRVWLPDIVLFNNADGNYEVSFKSNVFVDHHGDVTWVPPAMFKSSCRIDVEWFPFDEQCCTLVFGSWTYNSEEVRLHWYNNIQAVQLHDYSYSGIWDVIDVPGQLVHKPDLKENKMVFNVVIRRKTLFYTVILIIPTVLMAFLSVMAFYLPVDSGEKVSLTISLLLALVVFLLLVSKILPPTSNIPLMGKYLLLAFVLNITAVVGTVVIVNIYFRSALSHKMPTWVRKVFLEFLPHLLVMKRPERIPIFNGYFVEEYCASEIFDASLVMPSMTATMLPFLQVTTNLKAASSTSSGQSSEHHENCSKWKKRLSIRMSKRRAPRARLDDDSEDIIDDTNGNHVDSLQEKISKEMKTTVEAIAYIAEHMKREMSLKKMRDDWKYVAMVLDRLILLIFFGVTLGGTLGIICSAPHVFDFVDQEAIISKLNAKYLPSDMYS.

A signal peptide spans 1-20 (MKKTVKILLILITVFLKVHC). Residues 21–270 (NGGHDDEAAD…IRRKTLFYTV (250 aa)) lie on the Extracellular side of the membrane. The disordered stretch occupies residues 31–57 (FLSHTNIDDPNNSSDPNKNSDQGDTMG). Over residues 38 to 50 (DDPNNSSDPNKNS) the composition is skewed to low complexity. 4 N-linked (GlcNAc...) asparagine glycosylation sites follow: Asn41, Asn42, Asn80, and Asn131. Residues Cys185 and Cys199 are joined by a disulfide bond. A run of 3 helical transmembrane segments spans residues 271 to 291 (ILII…YLPV), 299 to 319 (LTIS…KILP), and 331 to 351 (LLLA…IVNI). The Cytoplasmic portion of the chain corresponds to 352–527 (YFRSALSHKM…WKYVAMVLDR (176 aa)). Residues 528–548 (LILLIFFGVTLGGTLGIICSA) traverse the membrane as a helical segment.

The protein belongs to the ligand-gated ion channel (TC 1.A.9) family. Acetylcholine receptor (TC 1.A.9.1) subfamily. Component of nicotinic acetylcholine receptor. In cholinergic motoneurons, composed of 2 non-alpha subunits acr-2 and acr-3, and 3 alpha subunits unc-38, unc-63 and acr-12. In terms of tissue distribution, specifically expressed in cholinergic ventral cord motoneurons of the VA, VB, DA and DB classes but not AS and VC classes. Expressed in PVQ and DVC neurons in the tail.

The protein resides in the postsynaptic cell membrane. Its subcellular location is the cell membrane. Non-alpha subunit of nicotinic acetylcholine receptor (nAChR). Acts in cholinergic motoneurons to regulate presynaptic neurotransmitter release, thereby ensuring normal level of excitation of cholinergic motoneurons during locomotion. The polypeptide is Acetylcholine receptor subunit beta-type acr-2 (acr-2) (Caenorhabditis elegans).